The chain runs to 257 residues: Imidazole glycerol phosphate synthase subunit HisF (257 aa).

Catalysis depends on residues Asp12 and Asp131.

The protein belongs to the HisA/HisF family. In terms of assembly, heterodimer of HisH and HisF.

The protein resides in the cytoplasm. It catalyses the reaction 5-[(5-phospho-1-deoxy-D-ribulos-1-ylimino)methylamino]-1-(5-phospho-beta-D-ribosyl)imidazole-4-carboxamide + L-glutamine = D-erythro-1-(imidazol-4-yl)glycerol 3-phosphate + 5-amino-1-(5-phospho-beta-D-ribosyl)imidazole-4-carboxamide + L-glutamate + H(+). It participates in amino-acid biosynthesis; L-histidine biosynthesis; L-histidine from 5-phospho-alpha-D-ribose 1-diphosphate: step 5/9. In terms of biological role, IGPS catalyzes the conversion of PRFAR and glutamine to IGP, AICAR and glutamate. The HisF subunit catalyzes the cyclization activity that produces IGP and AICAR from PRFAR using the ammonia provided by the HisH subunit. In Rhodococcus jostii (strain RHA1), this protein is Imidazole glycerol phosphate synthase subunit HisF.